The sequence spans 262 residues: Small ribosomal subunit protein eS4 (262 aa).

In terms of domain architecture, S4 RNA-binding spans 42–105 (LPLXVFLRNR…NEHFRLAYDV (64 aa)).

This sequence belongs to the eukaryotic ribosomal protein eS4 family.

This is Small ribosomal subunit protein eS4 (RPS4) from Candida albicans (Yeast).